The chain runs to 429 residues: High mobility group nucleosome-binding domain-containing protein 5 (429 aa).

A disordered region spans residues 1–429 (MPKRKAAGDA…GEKGEPVSTV (429 aa)). Thr-29 carries the post-translational modification Phosphothreonine. The span at 35-44 (KRASTSRKTK) shows a compositional bias: basic residues. Residue Lys-64 forms a Glycyl lysine isopeptide (Lys-Gly) (interchain with G-Cter in SUMO2) linkage. Ser-90 is subject to Phosphoserine. Composition is skewed to basic and acidic residues over residues 92-101 (METEEVKEQI) and 109-124 (GGEKKEAVVTKGKNDE). Residue Lys-98 forms a Glycyl lysine isopeptide (Lys-Gly) (interchain with G-Cter in SUMO1); alternate linkage. Residue Lys-98 forms a Glycyl lysine isopeptide (Lys-Gly) (interchain with G-Cter in SUMO2); alternate linkage. A Glycyl lysine isopeptide (Lys-Gly) (interchain with G-Cter in SUMO2) cross-link involves residue Lys-121. Residues 133–152 (EKDEDEKEHEDTGEEGEDGE) show a composition bias toward acidic residues. Over residues 153-195 (REGGLKEKPDVAEIEDAKEAKDDEEKEDKEKEDDKGGDGKKEE) the composition is skewed to basic and acidic residues. Over residues 196 to 209 (EKDDEGEAETEEEV) the composition is skewed to acidic residues. Basic and acidic residues-rich tracts occupy residues 210–387 (KEQQ…NEDR) and 413–429 (NKDFKEDGEKGEPVSTV).

The protein belongs to the HMGN family. In terms of tissue distribution, expressed in trophoblast giant cells.

The protein localises to the nucleus. Functionally, preferentially binds to euchromatin and modulates cellular transcription by counteracting linker histone-mediated chromatin compaction. In Rattus norvegicus (Rat), this protein is High mobility group nucleosome-binding domain-containing protein 5.